Here is a 122-residue protein sequence, read N- to C-terminus: Large ribosomal subunit protein uL14 (122 aa).

It belongs to the universal ribosomal protein uL14 family. As to quaternary structure, part of the 50S ribosomal subunit. Forms a cluster with proteins L3 and L19. In the 70S ribosome, L14 and L19 interact and together make contacts with the 16S rRNA in bridges B5 and B8.

Binds to 23S rRNA. Forms part of two intersubunit bridges in the 70S ribosome. This chain is Large ribosomal subunit protein uL14, found in Caldicellulosiruptor bescii (strain ATCC BAA-1888 / DSM 6725 / KCTC 15123 / Z-1320) (Anaerocellum thermophilum).